The chain runs to 312 residues: Probable phytanoyl-CoA dioxygenase (312 aa).

2-oxoglutarate contacts are provided by residues Lys-84, Met-124, 142–144, and Trp-160; that span reads HQD. Residues His-142 and Asp-144 each contribute to the Fe cation site. His-231 lines the Fe cation pocket. 2-oxoglutarate is bound by residues Ser-233 and Arg-242.

Belongs to the PhyH family. Requires Fe cation as cofactor. The cofactor is L-ascorbate.

The catalysed reaction is phytanoyl-CoA + 2-oxoglutarate + O2 = 2-hydroxyphytanoyl-CoA + succinate + CO2. It functions in the pathway lipid metabolism; fatty acid metabolism. Its function is as follows. Converts phytanoyl-CoA to 2-hydroxyphytanoyl-CoA. The chain is Probable phytanoyl-CoA dioxygenase from Caenorhabditis elegans.